Consider the following 386-residue polypeptide: MKFVDEASILVVAGDGGNGCVSFRREKYIPKGGPDGGDGGDGGDVWMEADENLNTLIDYRFEKSFRAERGQNGASRDCTGKRGKDVTIKVPVGTRVIDQGTGETMGDMTKHGQRLLVAKGGWHGLGNTRFKSSVNRTPRQKTNGTPGDKRELLLELMLLADVGMLGMPNAGKSTFIRAVSAAKPKVADYPFTTLVPSLGVVRMDNEKSFVVADIPGLIEGAAEGAGLGIRFLKHLERCRVLLHLIDIDPIDGTDPVENARIIISELEKYSQDLAAKPRWLVFNKIDLLDKVEAEEKAKAIAEALGWEDKYYLISAASGLGVKDLCWDVMTFIIENPVVQAEEAKQPEKVEFMWDDYHRQQLEEIAEEDDEDWDEDDEEGVEFIYKR.

Positions Met-1–Leu-159 constitute an Obg domain. Residues Asn-127–Gly-147 form a disordered region. Polar residues predominate over residues Arg-129–Thr-145. The OBG-type G domain occupies Ala-160–Ile-333. GTP contacts are provided by residues Gly-166 to Ser-173, Phe-191 to Val-195, Asp-213 to Gly-216, Asn-283 to Asp-286, and Ser-314 to Ala-316. Mg(2+) is bound by residues Ser-173 and Thr-193.

Belongs to the TRAFAC class OBG-HflX-like GTPase superfamily. OBG GTPase family. As to quaternary structure, monomer. Mg(2+) serves as cofactor.

Its subcellular location is the cytoplasm. Its function is as follows. An essential GTPase which binds GTP, GDP and possibly (p)ppGpp with moderate affinity, with high nucleotide exchange rates and a fairly low GTP hydrolysis rate. Plays a role in control of the cell cycle, stress response, ribosome biogenesis and in those bacteria that undergo differentiation, in morphogenesis control. This chain is GTPase Obg, found in Escherichia coli (strain UTI89 / UPEC).